Consider the following 464-residue polypeptide: Protein FAM90A9 (464 aa).

3 disordered regions span residues 1–42 (MMAR…DPRL), 70–389 (PATL…HDGA), and 411–437 (APSF…SEAP). Composition is skewed to basic and acidic residues over residues 74–89 (GKKE…KPRV) and 97–114 (NKDK…DPQR). A compositionally biased stretch (low complexity) spans 180-197 (LASLSPLRKASLSSSSSL).

This sequence belongs to the FAM90 family.

This is Protein FAM90A9 (FAM90A9) from Homo sapiens (Human).